Consider the following 430-residue polypeptide: Transcription factor PIF4 (430 aa).

Disordered stretches follow at residues glutamine 42–threonine 71, methionine 97–proline 136, threonine 160–arginine 183, aspartate 223–glutamate 266, and serine 405–histidine 430. The span at threonine 43 to leucine 60 shows a compositional bias: basic and acidic residues. The span at arginine 61 to threonine 71 shows a compositional bias: polar residues. Positions cysteine 126–proline 136 are enriched in pro residues. The segment covering threonine 160–leucine 175 has biased composition (polar residues). Residues asparagine 244–asparagine 253 show a composition bias toward low complexity. Over residues arginine 257 to glutamate 266 the composition is skewed to basic and acidic residues. The region spanning arginine 257–leucine 306 is the bHLH domain. The segment covering serine 405–proline 419 has biased composition (low complexity).

The protein belongs to the bHLH protein family. Interacts preferentially with the Pfr form of phytochrome B (phyB). Binds DNA as a homodimer, but once bound to DNA, loses its capacity to interact with phyB. Interacts with APRR1/TOC1 and PIF3. Binds to RGL2 and RGA. Forms non-functional heterodimer with HFR1. Interacts with PHYB, CRY1 and CRY2 in the nucleus in response to low blue light (LBL). Interacts with FYPP1 and FYPP3. Associates to PTAC12/HMR/PAP5, which acts as a transcriptional coactivator to trigger the thermoresponsive growth-relevant genes and promote warm-temperature-dependent PIF4 accumulation. Interacts with MED14. As to expression, mainly expressed in leaves, stems and seedlings, and, to a lower extent, in fruits, flowers and roots.

It localises to the nucleus. Its function is as follows. Transcription factor acting negatively in the phytochrome B signaling pathway. May regulate the expression of a subset of genes involved in cell expansion by binding to the G-box motif. Activated by CRY1 and CRY2 in response to low blue light (LBL) by direct binding at chromatin on E-box variant 5'-CA[CT]GTG-3' to stimulate specific gene expression to adapt global physiology (e.g. hypocotyl elongation in low blue light). Element of a PIF4/HMR/MED14-dependent thermoresponsive process; collaboratively with its transcriptional coactivator PTAC12/HMR/PAP5, involved in the regulation of thermoresponsive growth-relevant genes (e.g. mainly involved in biosynthesis and signaling of the phytohormone auxin) leading to daytime warm temperature elicitation of MED14-dependent thermomorphogenesis (e.g. hypocotyl elongation). This is Transcription factor PIF4 from Arabidopsis thaliana (Mouse-ear cress).